The following is a 393-amino-acid chain: GDNF family receptor alpha-like (393 aa).

Positions 1-19 (MLVFIFLAVTLSSENESSS) are cleaved as a signal peptide. At 20-349 (QTNDCAHLIQ…LTGFNSFFNG (330 aa)) the chain is on the extracellular side. Residues Asn-59, Asn-65, Asn-101, and Asn-115 are each glycosylated (N-linked (GlcNAc...) asparagine). Intrachain disulfides connect Cys-131–Cys-189, Cys-138–Cys-144, Cys-155–Cys-167, Cys-162–Cys-210, Cys-191–Cys-198, Cys-220–Cys-291, Cys-227–Cys-233, Cys-244–Cys-275, Cys-252–Cys-258, Cys-269–Cys-316, and Cys-293–Cys-304. A required for interaction with GDF15 region spans residues 149–228 (ALYLKACSAN…TCLSVIHTCR (80 aa)). Residues 350–370 (ELLYVVVCMAVTCGILFLVML) form a helical membrane-spanning segment. Over 371–393 (KLRIQSEKRDPSSIEIAGGVIIQ) the chain is Cytoplasmic.

Belongs to the GDNFR family. As to quaternary structure, interacts (via the extracellular domain) with GDF15 and RET; receptor of GDF15, mediates cellular signaling through interaction with RET after GDF15-binding. Interaction with RET requires previous GDF15-binding. In terms of processing, cleaved and inactivated by MMP14, inhibiting the GDF15-GFRAL aversive response. In terms of tissue distribution, expressed in the brainstem, restricted to cells in the area postrema and the immediately adjacent region of the nucleus tractus solitarius.

The protein resides in the cell membrane. With respect to regulation, specifically inhibited by 3P10 monoclonal antibody. Strongly activated by LY3463251, a long-acting and stable agonist composed of GDF15 conjugated monomeric human IgG4 Fc. Brainstem-restricted receptor for GDF15 hormone, which triggers an aversive response, characterized by nausea, vomiting, and/or loss of appetite in response to various stresses. The aversive response is both required to reduce continuing exposure to those stresses at the time of exposure and to promote avoidance behavior in the future. The GDF15-GFRAL aversive response is triggered by stresses, such as anticancer drugs (camptothecin or cisplatin), cancers or drugs such as metformin. Upon interaction with its ligand, GDF15, mediates the GDF15-induced autophosphorylation and activation of the RET tyrosine kinase receptor, leading to activation of MAPK- and AKT- signaling pathways. Ligand-binding activates GFRAL-expressing neurons localized in the area postrema and nucleus tractus solitarius of the brainstem. The GDF15-GFRAL signal induces expression of genes involved in metabolism, such as lipid metabolism in adipose tissues. This Mus musculus (Mouse) protein is GDNF family receptor alpha-like (Gfral).